We begin with the raw amino-acid sequence, 529 residues long: Bifunctional purine biosynthesis protein PurH (529 aa).

Positions 1–148 (MQQRRPVRRA…KNHKDVAIVV (148 aa)) constitute an MGS-like domain.

It belongs to the PurH family.

It carries out the reaction (6R)-10-formyltetrahydrofolate + 5-amino-1-(5-phospho-beta-D-ribosyl)imidazole-4-carboxamide = 5-formamido-1-(5-phospho-D-ribosyl)imidazole-4-carboxamide + (6S)-5,6,7,8-tetrahydrofolate. It catalyses the reaction IMP + H2O = 5-formamido-1-(5-phospho-D-ribosyl)imidazole-4-carboxamide. The protein operates within purine metabolism; IMP biosynthesis via de novo pathway; 5-formamido-1-(5-phospho-D-ribosyl)imidazole-4-carboxamide from 5-amino-1-(5-phospho-D-ribosyl)imidazole-4-carboxamide (10-formyl THF route): step 1/1. It participates in purine metabolism; IMP biosynthesis via de novo pathway; IMP from 5-formamido-1-(5-phospho-D-ribosyl)imidazole-4-carboxamide: step 1/1. This chain is Bifunctional purine biosynthesis protein PurH, found in Salmonella paratyphi A (strain ATCC 9150 / SARB42).